The sequence spans 1321 residues: C-Jun-amino-terminal kinase-interacting protein 4 (1321 aa).

N-acetylmethionine is present on M1. The region spanning 7–95 (VVYQEEPGGS…ITQYEREKAL (89 aa)) is the RH1 domain. Residues 66 to 166 (AQDQEHQVEL…NALHQRHTEM (101 aa)) are a coiled coil. A phosphoserine mark is found at S109, S183, S185, S194, and S203. Positions 203–308 (SLGIFPLPAG…EGFVKGTDTS (106 aa)) are disordered. Phosphothreonine is present on T217. A compositionally biased stretch (polar residues) spans 236–248 (ELSQPRSHTSLKV). Residues S238, S251, S265, S268, and S272 each carry the phosphoserine modification. The span at 266–285 (DISQGGSKATTPASTANSDV) shows a compositional bias: polar residues. Position 292 is a phosphothreonine (T292). S311, S329, S332, and S347 each carry phosphoserine. The span at 322-332 (AQETRNVSTES) shows a compositional bias: polar residues. A disordered region spans residues 322 to 341 (AQETRNVSTESGENEEKSEV). T348, T365, and T418 each carry phosphothreonine. Residues 408–534 (REVENLILEN…LQEAVRWTEM (127 aa)) adopt a coiled-coil conformation. Positions 473-489 (LRKARAEAEDARQKAKD) are enriched in basic and acidic residues. Disordered regions lie at residues 473 to 500 (LRKA…TAQR) and 563 to 600 (SSNA…SQLP). Positions 500-604 (RKRFTRVEMA…TLSQLPGDKS (105 aa)) constitute an RH2 domain. A Phosphothreonine modification is found at T586. Residue S588 is modified to Phosphoserine. A Phosphothreonine modification is found at T595. Phosphoserine is present on residues S705, S728, S730, S732, and S733. A coiled-coil region spans residues 724-758 (SKQRSASQSSLDKLDQELKEQQKEFKNQEELSSQV). Positions 853–883 (TGAATSPSTNGASPVIEKPPEMETENSEVDE) are disordered. Over residues 855-864 (AATSPSTNGA) the composition is skewed to polar residues. The segment covering 874–883 (METENSEVDE) has biased composition (acidic residues). Phosphoserine is present on S1188. The tract at residues 1239–1267 (PQSSSGGADLTADKAGSSAQEPSSQTPLK) is disordered. Over residues 1255–1266 (SSAQEPSSQTPL) the composition is skewed to polar residues. T1264 carries the post-translational modification Phosphothreonine.

It belongs to the JIP scaffold family. In terms of assembly, homodimer. The homodimer interacts with ARF6, forming a heterotetramer. Homooligomer. Interacts with MAX, MAPK8, MAPK14, MAP3K3, MYC, and MAP2K4. Interacts with KNS2. Interaction with KNS2 is important in the formation of ternary complex with MAPK8. Interacts with PIP4P1. Interacts with PIKFYVE. In terms of processing, phosphorylated by MAPK8 and MAPK14. As to expression, highly expressed in brain, kidney, liver, heart.

The protein resides in the cytoplasm. The protein localises to the perinuclear region. It is found in the lysosome membrane. In terms of biological role, the JNK-interacting protein (JIP) group of scaffold proteins selectively mediates JNK signaling by aggregating specific components of the MAPK cascade to form a functional JNK signaling module. Regulates lysosomal positioning by acting as an adapter protein which links PIP4P1-positive lysosomes to the dynein-dynactin complex. Assists PIKFYVE selective functionality in microtubule-based endosome-to-TGN trafficking. The protein is C-Jun-amino-terminal kinase-interacting protein 4 of Mus musculus (Mouse).